The chain runs to 854 residues: DNA mismatch repair protein MutS (854 aa).

616–623 (GPNMGGKS) is a binding site for ATP.

The protein belongs to the DNA mismatch repair MutS family.

In terms of biological role, this protein is involved in the repair of mismatches in DNA. It is possible that it carries out the mismatch recognition step. This protein has a weak ATPase activity. The chain is DNA mismatch repair protein MutS from Pectobacterium atrosepticum (strain SCRI 1043 / ATCC BAA-672) (Erwinia carotovora subsp. atroseptica).